The sequence spans 127 residues: Protein chibby homolog 1 (127 aa).

Polar residues predominate over residues 1–10 (MPLFGSTFSP). The tract at residues 1–26 (MPLFGSTFSPKKTPPRKSASLSNLHN) is disordered. 2 positions are modified to phosphoserine: serine 9 and serine 20. Positions 60-112 (IAETGISGGVDRREAQRLRRRNQQLEEENNLLRLKVDILLDMLSETTAESHLM) are minimal region for the interaction with PKD2. A coiled-coil region spans residues 68-125 (GVDRREAQRLRRRNQQLEEENNLLRLKVDILLDMLSETTAESHLMEKELDELKSVSRR). Positions 77 to 98 (LRRRNQQLEEENNLLRLKVDIL) are leucine-zipper; mediates homodimerization.

This sequence belongs to the chibby family. As to quaternary structure, homodimer. Homodimerization is essential for nuclear localization and interaction with KPNA4 but is dispensable for interaction with CTNNB1. Interacts with polycystin-2/PKD2 and GM130. Interacts with the C-terminal region of CTNNB1. Interacts (C-terminus) with TCIM (C-terminus), TCIM competes with CTNNB1 for the interaction with CBY1. Interacts with FAM92A; this interaction facilitates targeting of FAM92A to cilium basal body. Interacts with CIBAR2. Interacts with KPNA4.

It localises to the nucleus speckle. The protein resides in the cytoplasm. The protein localises to the cytoskeleton. It is found in the cilium basal body. Its subcellular location is the microtubule organizing center. It localises to the centrosome. The protein resides in the centriole. The protein localises to the golgi apparatus. It is found in the trans-Golgi network. Its subcellular location is the cell projection. It localises to the cilium. The protein resides in the flagellum. The protein localises to the nucleus. Inhibits the Wnt/Wingless pathway by binding to CTNNB1/beta-catenin and inhibiting beta-catenin-mediated transcriptional activation through competition with TCF/LEF transcription factors. Has also been shown to play a role in regulating the intracellular trafficking of polycystin-2/PKD2 and possibly of other intracellular proteins. Promotes adipocyte and cardiomyocyte differentiation. This is Protein chibby homolog 1 (CBY1) from Bos taurus (Bovine).